Here is a 226-residue protein sequence, read N- to C-terminus: Cytochrome c oxidase subunit 2 (226 aa).

The Mitochondrial intermembrane segment spans residues 1–14 (MAYPLQLGLQDATS). Residues 15 to 45 (PIMEELTSFHDHTLMIVFLISTLVLYIISLM) traverse the membrane as a helical segment. At 46–59 (LTTKLTHTSTMDAQ) the chain is on the mitochondrial matrix side. A helical membrane pass occupies residues 60 to 87 (EIETIWTILPAIILIMIALPSLRVLYMM). At 88 to 226 (DEINNPALTV…KYFEAWSASM (139 aa)) the chain is on the mitochondrial intermembrane side. Residues histidine 161, cysteine 196, glutamate 198, cysteine 200, histidine 204, and methionine 207 each coordinate Cu cation. Glutamate 198 lines the Mg(2+) pocket. Tyrosine 218 is subject to Phosphotyrosine.

The protein belongs to the cytochrome c oxidase subunit 2 family. As to quaternary structure, component of the cytochrome c oxidase (complex IV, CIV), a multisubunit enzyme composed of 14 subunits. The complex is composed of a catalytic core of 3 subunits MT-CO1, MT-CO2 and MT-CO3, encoded in the mitochondrial DNA, and 11 supernumerary subunits COX4I, COX5A, COX5B, COX6A, COX6B, COX6C, COX7A, COX7B, COX7C, COX8 and NDUFA4, which are encoded in the nuclear genome. The complex exists as a monomer or a dimer and forms supercomplexes (SCs) in the inner mitochondrial membrane with NADH-ubiquinone oxidoreductase (complex I, CI) and ubiquinol-cytochrome c oxidoreductase (cytochrome b-c1 complex, complex III, CIII), resulting in different assemblies (supercomplex SCI(1)III(2)IV(1) and megacomplex MCI(2)III(2)IV(2)). Found in a complex with TMEM177, COA6, COX18, COX20, SCO1 and SCO2. Interacts with TMEM177 in a COX20-dependent manner. Interacts with COX20. Interacts with COX16. Cu cation serves as cofactor.

The protein resides in the mitochondrion inner membrane. The catalysed reaction is 4 Fe(II)-[cytochrome c] + O2 + 8 H(+)(in) = 4 Fe(III)-[cytochrome c] + 2 H2O + 4 H(+)(out). Functionally, component of the cytochrome c oxidase, the last enzyme in the mitochondrial electron transport chain which drives oxidative phosphorylation. The respiratory chain contains 3 multisubunit complexes succinate dehydrogenase (complex II, CII), ubiquinol-cytochrome c oxidoreductase (cytochrome b-c1 complex, complex III, CIII) and cytochrome c oxidase (complex IV, CIV), that cooperate to transfer electrons derived from NADH and succinate to molecular oxygen, creating an electrochemical gradient over the inner membrane that drives transmembrane transport and the ATP synthase. Cytochrome c oxidase is the component of the respiratory chain that catalyzes the reduction of oxygen to water. Electrons originating from reduced cytochrome c in the intermembrane space (IMS) are transferred via the dinuclear copper A center (CU(A)) of subunit 2 and heme A of subunit 1 to the active site in subunit 1, a binuclear center (BNC) formed by heme A3 and copper B (CU(B)). The BNC reduces molecular oxygen to 2 water molecules using 4 electrons from cytochrome c in the IMS and 4 protons from the mitochondrial matrix. This chain is Cytochrome c oxidase subunit 2 (MT-CO2), found in Perognathus flavus (Silky pocket mouse).